A 103-amino-acid polypeptide reads, in one-letter code: Putative ribosomal RNA-processing protein 7 homolog B (103 aa).

Positions 1 to 19 (MEAYDQKIAEEEAKAKEEE) are enriched in basic and acidic residues. The tract at residues 1 to 25 (MEAYDQKIAEEEAKAKEEEGVPDEE) is disordered. Residues 71 to 100 (ESKMEHLAQLRKKFEEDKQRIELLRAQRKF) adopt a coiled-coil conformation.

This sequence belongs to the RRP7 family.

This is Putative ribosomal RNA-processing protein 7 homolog B from Homo sapiens (Human).